The primary structure comprises 319 residues: Olfactory receptor 13F1 (319 aa).

Over 1-25 (MFPANWTSVKVFFFLGFFHYPKVQV) the chain is Extracellular. Asn-5 carries N-linked (GlcNAc...) asparagine glycosylation. A helical membrane pass occupies residues 26 to 46 (IIFAVCLLMYLITLLGNIFLI). Topologically, residues 47-54 (SITILDSH) are cytoplasmic. A helical membrane pass occupies residues 55–75 (LHTPMYLFLSNLSFLDIWYSS). Topologically, residues 76-99 (SALSPMLANFVSGRNTISFSGCAT) are extracellular. An intrachain disulfide couples Cys-97 to Cys-189. A helical membrane pass occupies residues 100 to 120 (QMYLSLAMGSTECVLLPMMAY). Residues 121 to 139 (DRYVAICNPLRYPVIMNRR) lie on the Cytoplasmic side of the membrane. A helical membrane pass occupies residues 140-160 (TCVQIAAGSWMTGCLTAMVEM). At 161-197 (MSVLPLSLCGNSIINHFTCEILAILKLVCVDTSLVQL) the chain is on the extracellular side. Residues 198–217 (IMLVISVLLLPMPMLLICIS) traverse the membrane as a helical segment. Residues 218 to 237 (YAFILASILRISSVEGRSKA) are Cytoplasmic-facing. The helical transmembrane segment at 238-258 (FSTCTAHLMVVVLFYGTALSM) threads the bilayer. Over 259-271 (HLKPSAVDSQEID) the chain is Extracellular. A helical transmembrane segment spans residues 272–292 (KFMALVYAGQTPMLNPIIYSL). The Cytoplasmic segment spans residues 293–319 (RNKEVKVALKKLLIRNHFNTAFISILK).

Belongs to the G-protein coupled receptor 1 family.

The protein localises to the cell membrane. Functionally, odorant receptor. This Homo sapiens (Human) protein is Olfactory receptor 13F1 (OR13F1).